Reading from the N-terminus, the 303-residue chain is Phytochrome-associated serine/threonine-protein phosphatase (303 aa).

The Zn(2+) site is built by aspartate 50, histidine 52, aspartate 78, and asparagine 110. The active-site Proton donor is the histidine 111. Zn(2+) is bound by residues histidine 160 and histidine 234.

It belongs to the PPP phosphatase family. PP-6 (PP-V) subfamily. Interacts with PHYA and PHYB, mostly when they are phosphorylated and in Pfr forms. The cofactor is Zn(2+). Mostly expressed in flowers and stems.

The protein resides in the cytoplasm. It carries out the reaction O-phospho-L-seryl-[protein] + H2O = L-seryl-[protein] + phosphate. The catalysed reaction is O-phospho-L-threonyl-[protein] + H2O = L-threonyl-[protein] + phosphate. Functionally, catalytic subunit of protein phosphatase 6 (PP6). Dephosphorylates phosphorylated phytochromes, with a preference toward Pfr forms. Plays a major role in the photoperiodic control of flowering time in long days by modulating phytochrome signals in flowering time control. This Pisum sativum (Garden pea) protein is Phytochrome-associated serine/threonine-protein phosphatase.